The primary structure comprises 1071 residues: SLIT-ROBO Rho GTPase-activating protein 2 (1071 aa).

Residues 22-325 (KEIRAQLTEQ…AVENLDATSD (304 aa)) enclose the F-BAR domain. Over residues 181–203 (LKEAEKQEEKQIGKSVKQEDRQT) the composition is skewed to basic and acidic residues. A disordered region spans residues 181–211 (LKEAEKQEEKQIGKSVKQEDRQTPRSPDSTA). The residue at position 206 (S206) is a Phosphoserine. Positions 363–401 (QSELVQRCQQLQSRLSTLKIENEEVKKTMEATLQTIQDI) form a coiled coil. S427, S500, S691, and S695 each carry phosphoserine. Residues 489-679 (ARRSSTVRKQ…TIIIQHENIF (191 aa)) form the Rho-GAP domain. Positions 700-726 (CDSTHGETTSAEDSTQDVTAEHHTSDD) are disordered. The span at 705 to 717 (GETTSAEDSTQDV) shows a compositional bias: polar residues. Position 724 is a phosphoserine (S724). The SH3 domain occupies 728 to 787 (CEPIEAIAKFDYVGRTARELSFKKGASLLLYQRASDDWWEGRHNGIDGLIPHQYIVVQDT). S795 is subject to Phosphoserine. Disordered stretches follow at residues 795-819 (SSPKSEIEVMSEPPEEKVTARTGAS) and 838-918 (RKRP…DSPQ). A compositionally biased stretch (low complexity) spans 855–868 (HGLGSSLTDSSSLG). Polar residues-rich tracts occupy residues 874-885 (RPSSQPIMSQNL) and 897-907 (GHGSLNSISRH). Residue S916 is modified to Phosphoserine. R927 bears the Symmetric dimethylarginine; by PRMT5 mark. The residue at position 930 (S930) is a Phosphoserine. Residues 940-968 (EVIAQDIEATMNSALNELQELERQSSAKH) are a coiled coil. Residues 984 to 1012 (PVVAPTSEPSSPLHTQLLKDPEPAFQRSA) are disordered. Phosphoserine occurs at positions 990, 994, 1013, and 1027. Residues 1029 to 1071 (KMAAPVKPPATRPKPTVFPKTNATSPGVNSSASPQATDKSCTV) are disordered. Residues 1047–1071 (PKTNATSPGVNSSASPQATDKSCTV) show a composition bias toward polar residues.

As to quaternary structure, homodimer. Forms a heterooligomer with SRGAP1 and SRGAP3 through its F-BAR domain. Interacts (via SH3 domain) with GPHN. Interacts (via SH3 domain) with FMNL1 (activated by RAC1); regulates the actin filament severing activity of FMNL1 and actin dynamics. Interacts (via SH3 domain) with FMNL3. Interacts with RAC1; specifically stimulates RAC1 GTPase activity. Interacts (via F-BAR domain) with HOMER1. Interacts with ROBO1 and ROBO2. Interacts with FASLG. Interacts with PRMT5. Post-translationally, methylation at Arg-927 is required for the stimulation of cell migration, dimerization and localization at the plasma membrane protrusions.

Its subcellular location is the cell membrane. The protein localises to the cell projection. It is found in the dendritic spine. The protein resides in the postsynaptic density. It localises to the postsynaptic cell membrane. Its subcellular location is the lamellipodium. The protein localises to the cytoplasmic vesicle. It is found in the phagosome. The protein resides in the nucleus. It localises to the cytoplasm. Its subcellular location is the cytosol. Functionally, postsynaptic RAC1 GTPase activating protein (GAP) that plays a key role in neuronal morphogenesis and migration mainly during development of the cerebral cortex. Regulates excitatory and inhibitory synapse maturation and density in cortical pyramidal neurons. SRGAP2/SRGAP2A limits excitatory and inhibitory synapse density through its RAC1-specific GTPase activating activity, while it promotes maturation of both excitatory and inhibitory synapses through its ability to bind to the postsynaptic scaffolding protein HOMER1 at excitatory synapses, and the postsynaptic protein GPHN at inhibitory synapses. Mechanistically, acts by binding and deforming membranes, thereby regulating actin dynamics to regulate cell migration and differentiation. Promotes cell repulsion and contact inhibition of locomotion: localizes to protrusions with curved edges and controls the duration of RAC1 activity in contact protrusions. In non-neuronal cells, may also play a role in cell migration by regulating the formation of lamellipodia and filopodia. This is SLIT-ROBO Rho GTPase-activating protein 2 from Mus musculus (Mouse).